Reading from the N-terminus, the 396-residue chain is tRNA-specific 2-thiouridylase MnmA (396 aa).

ATP is bound by residues 35-42 (GLSGGVDS) and Leu-61. Residue Cys-122 is the Nucleophile of the active site. Cys-122 and Cys-221 are oxidised to a cystine. Gly-147 is an ATP binding site. An interaction with tRNA region spans residues 171–173 (KDQ). Cys-221 functions as the Cysteine persulfide intermediate in the catalytic mechanism. The segment at 326-327 (RY) is interaction with tRNA.

The protein belongs to the MnmA/TRMU family.

The protein resides in the cytoplasm. It carries out the reaction S-sulfanyl-L-cysteinyl-[protein] + uridine(34) in tRNA + AH2 + ATP = 2-thiouridine(34) in tRNA + L-cysteinyl-[protein] + A + AMP + diphosphate + H(+). In terms of biological role, catalyzes the 2-thiolation of uridine at the wobble position (U34) of tRNA, leading to the formation of s(2)U34. This is tRNA-specific 2-thiouridylase MnmA from Parasynechococcus marenigrum (strain WH8102).